A 56-amino-acid chain; its full sequence is Large ribosomal subunit protein bL33 (56 aa).

It belongs to the bacterial ribosomal protein bL33 family.

This chain is Large ribosomal subunit protein bL33, found in Glaesserella parasuis serovar 5 (strain SH0165) (Haemophilus parasuis).